The following is a 336-amino-acid chain: Inositol 2-dehydrogenase (336 aa).

This sequence belongs to the Gfo/Idh/MocA family. As to quaternary structure, homotetramer.

It catalyses the reaction myo-inositol + NAD(+) = scyllo-inosose + NADH + H(+). Its function is as follows. Involved in the oxidation of myo-inositol (MI) to 2-keto-myo-inositol (2KMI or 2-inosose). The protein is Inositol 2-dehydrogenase of Pseudomonas savastanoi pv. phaseolicola (strain 1448A / Race 6) (Pseudomonas syringae pv. phaseolicola (strain 1448A / Race 6)).